Here is a 676-residue protein sequence, read N- to C-terminus: Lon-like protease BrxL (676 aa).

The protein belongs to the BrxL family.

In terms of biological role, BREX systems (bacteriophage exclusion) provide immunity against bacteriophage. Part of a type 1 BREX system. This system allows phage adsorption but prevents phage DNA replication, without degradation of the phage DNA. Methylation of bacterial DNA by PglX probably guides self/non-self discrimination. When the brxA-brxB-brxC-pglX and pglZ-brxL operons are transformed into a susceptible B.subtilis strain (BEST7003) they confer resistance to bacteriophages SPbeta, SP16, Zeta, phi3T and SP02 and partial protection to phages SP01 and SP82G (these include lytic and temperate phage). They do not protect against phages phi105, rho10 or rho14. Additionally confers a very slight reduction in efficiency of plasmid transformation. This Bacillus cereus (strain H3081.97) protein is Lon-like protease BrxL.